A 458-amino-acid polypeptide reads, in one-letter code: Protein adenylyltransferase FICD (458 aa).

At 1-23 (MILMPMASVVAVAEPKWVSVWGR) the chain is on the cytoplasmic side. The helical; Signal-anchor for type II membrane protein transmembrane segment at 24-44 (FLWMALLSMALGSLLALLLPL) threads the bilayer. Topologically, residues 45–458 (GVVEEHCLAV…GFKETLPVRP (414 aa)) are lumenal. An O-AMP-threonine; by autocatalysis modification is found at Thr80. TPR repeat units follow at residues 106-139 (AKAA…DPGF) and 140-173 (VDAL…SPFH). Thr183 carries the O-AMP-threonine; by autocatalysis modification. Residues 230 to 235 (TVAIEG) carry the Inhibitory (S/T)XXXE(G/N) motif motif. Glu234 provides a ligand contact to ATP. The N-linked (GlcNAc...) asparagine glycan is linked to Asn275. One can recognise a Fido domain in the interval 285 to 420 (VTMDDMLEIH…VRPFIRFIAK (136 aa)). An ATP-binding site is contributed by 316–319 (VGHH). His363 is an active-site residue. ATP is bound by residues 367–374 (DGNGRTSR), 399–400 (YY), and Asn407.

This sequence belongs to the fic family. Homodimer. Interacts with HD. Requires Mg(2+) as cofactor. Mn(2+) is required as a cofactor. In terms of processing, auto-AMPylated in vitro.

The protein localises to the endoplasmic reticulum membrane. The enzyme catalyses L-tyrosyl-[protein] + ATP = O-(5'-adenylyl)-L-tyrosyl-[protein] + diphosphate. It catalyses the reaction 3-O-(5'-adenylyl)-L-threonyl-[protein] + H2O = L-threonyl-[protein] + AMP + H(+). It carries out the reaction L-threonyl-[protein] + ATP = 3-O-(5'-adenylyl)-L-threonyl-[protein] + diphosphate. Its activity is regulated as follows. The side chain of Glu-234 determines which of the two opposing activities (AMPylase or de-AMPylase) will take place. In response to endoplasmic reticulum stress, mediates de-AMPylase activity. Adenylyltransferase activity is inhibited by the inhibitory helix present at the N-terminus: Glu-234 binds ATP and competes with ATP-binding at Arg-374, thereby preventing adenylyltransferase activity. In unstressed cells, disengagement of Glu-234 promotes adenylyltransferase activity. Activation dissociates ATP-binding from Glu-234, allowing ordered binding of the entire ATP moiety with the alpha-phosphate in an orientation that is productive for accepting an incoming target hydroxyl side chain. Its function is as follows. Protein that can both mediate the addition of adenosine 5'-monophosphate (AMP) to specific residues of target proteins (AMPylation), and the removal of the same modification from target proteins (de-AMPylation), depending on the context. The side chain of Glu-231 determines which of the two opposing activities (AMPylase or de-AMPylase) will take place. Acts as a key regulator of the ERN1/IRE1-mediated unfolded protein response (UPR) by mediating AMPylation or de-AMPylation of HSPA5/BiP. In unstressed cells, acts as an adenylyltransferase by mediating AMPylation of HSPA5/BiP at 'Thr-518', thereby inactivating it. In response to endoplasmic reticulum stress, acts as a phosphodiesterase by mediating removal of ATP (de-AMPylation) from HSPA5/BiP at 'Thr-518', leading to restore HSPA5/BiP activity. Although it is able to AMPylate RhoA, Rac and Cdc42 Rho GTPases in vitro, Rho GTPases do not constitute physiological substrates. The sequence is that of Protein adenylyltransferase FICD from Mus musculus (Mouse).